A 383-amino-acid chain; its full sequence is UDP-N-acetylglucosamine 2-epimerase (383 aa).

It belongs to the UDP-N-acetylglucosamine 2-epimerase family.

It carries out the reaction UDP-N-acetyl-alpha-D-glucosamine = UDP-N-acetyl-alpha-D-mannosamine. The protein operates within capsule biogenesis; capsule polysaccharide biosynthesis. Its function is as follows. Non-hydrolyzing C2-epimerase involved in the biosynthesis of capsular polysaccharides. Catalyzes the C2 epimerization of UDP-N-acetylglucosamine (UDP-GlcNAc) to form UDP-N-acetylmannosamine (UDP-ManNAc). This is UDP-N-acetylglucosamine 2-epimerase from Campylobacter jejuni.